We begin with the raw amino-acid sequence, 108 residues long: ATP synthase subunit H, mitochondrial (108 aa).

The N-terminal 19 residues, 1 to 19 (MFTLRAASRRAFSTSIARR), are a transit peptide targeting the mitochondrion. Disordered stretches follow at residues 40-60 (AKDA…KPPV) and 75-108 (APVD…GVAV). Residues 47–60 (VKPWSAPSAPKPPV) are compositionally biased toward low complexity. Residues 81 to 92 (GQTNSKSASPQA) are compositionally biased toward polar residues. Residues 93-108 (NDEDWLAFEEEEGVAV) are compositionally biased toward acidic residues.

F-type ATP synthases have 2 components, the catalytic core F(1) and the membrane-embedded component F(0), linked together by a central stalk and a peripheral stalk. The central stalk, also called rotor shaft, is often seen as part of F(1). The peripheral stalk is seen as part of F(0). F(0) contains the membrane channel next to the rotor. F-type ATP synthases form dimers but each monomer functions independently in ATP generation. The dimer consists of 17 different polypeptides: ATP1 (subunit alpha, 3 molecules per monomer, part of F(1)), ATP2 (subunit beta, 3 copies per monomer, part of F(1)), ATP3 (subunit gamma, part of the central stalk), ATP4 (subunit b, part of the peripheral stalk), ATP5/OSCP (subunit 5/OSCP, part of the peripheral stalk), ATP6 (subunit a, part of the peripheral stalk), ATP7 (subunit d, part of the peripheral stalk), ATP8 (subunit 8, part of the peripheral stalk), OLI1 (subunit c, part of the rotor, 10 molecules per monomer), ATP14 (subunit H, part of the peripheral stalk), ATP15 (subunit epsilon, part of the central stalk), ATP16 (subunit delta, part of the central stalk), ATP17 (subunit f, part of the peripheral stalk), ATP18 (subunit i/j, part of the peripheral stalk), ATP19 (subunit k, dimer-specific, at interface between monomers), ATP20 (subunit g, at interface between monomers), TIM11 (subunit e, at interface between monomers).

It localises to the mitochondrion inner membrane. Its function is as follows. Mitochondrial membrane ATP synthase (F(1)F(0) ATP synthase or Complex V) produces ATP from ADP in the presence of a proton gradient across the membrane which is generated by electron transport complexes of the respiratory chain. F-type ATP synthases consist of two structural domains, F(1) - containing the extramembraneous catalytic core, and F(0) - containing the membrane proton channel, linked together by a central stalk and a peripheral stalk. During catalysis, ATP synthesis in the catalytic domain of F(1) is coupled via a rotary mechanism of the central stalk subunits to proton translocation. Part of the peripheral stalk. This chain is ATP synthase subunit H, mitochondrial, found in Yarrowia lipolytica (strain CLIB 122 / E 150) (Yeast).